The following is an 87-amino-acid chain: Chromosomal protein MC1b (87 aa).

Protects DNA against thermal denaturation and modulates transcription. The chain is Chromosomal protein MC1b from Methanothrix soehngenii (Methanosaeta concilii).